We begin with the raw amino-acid sequence, 443 residues long: ATP-dependent protease ATPase subunit HslU (443 aa).

ATP-binding positions include isoleucine 19, 61–66 (GVGKTE), aspartate 256, glutamate 321, and arginine 393.

Belongs to the ClpX chaperone family. HslU subfamily. In terms of assembly, a double ring-shaped homohexamer of HslV is capped on each side by a ring-shaped HslU homohexamer. The assembly of the HslU/HslV complex is dependent on binding of ATP.

Its subcellular location is the cytoplasm. ATPase subunit of a proteasome-like degradation complex; this subunit has chaperone activity. The binding of ATP and its subsequent hydrolysis by HslU are essential for unfolding of protein substrates subsequently hydrolyzed by HslV. HslU recognizes the N-terminal part of its protein substrates and unfolds these before they are guided to HslV for hydrolysis. The protein is ATP-dependent protease ATPase subunit HslU of Cupriavidus pinatubonensis (strain JMP 134 / LMG 1197) (Cupriavidus necator (strain JMP 134)).